Consider the following 180-residue polypeptide: MSDSTTIARPYAKAIFEHALAEKKLSEWSEYLTLLAQVVLTPQATQFIANPASTDEQQIELLIEICGSKFKKNDALNNLIKLLTTNKRLMLLPEIKALYEVYRAEQEKILEVDVVSYSELTPAQQQRLSESLSQRLSRKVSLKISIDPSLLGGALIRAGDLVIDGSVRGKLNMLGTSLAA.

It belongs to the ATPase delta chain family. In terms of assembly, F-type ATPases have 2 components, F(1) - the catalytic core - and F(0) - the membrane proton channel. F(1) has five subunits: alpha(3), beta(3), gamma(1), delta(1), epsilon(1). F(0) has three main subunits: a(1), b(2) and c(10-14). The alpha and beta chains form an alternating ring which encloses part of the gamma chain. F(1) is attached to F(0) by a central stalk formed by the gamma and epsilon chains, while a peripheral stalk is formed by the delta and b chains.

Its subcellular location is the cell inner membrane. Its function is as follows. F(1)F(0) ATP synthase produces ATP from ADP in the presence of a proton or sodium gradient. F-type ATPases consist of two structural domains, F(1) containing the extramembraneous catalytic core and F(0) containing the membrane proton channel, linked together by a central stalk and a peripheral stalk. During catalysis, ATP synthesis in the catalytic domain of F(1) is coupled via a rotary mechanism of the central stalk subunits to proton translocation. In terms of biological role, this protein is part of the stalk that links CF(0) to CF(1). It either transmits conformational changes from CF(0) to CF(1) or is implicated in proton conduction. This Legionella pneumophila (strain Paris) protein is ATP synthase subunit delta.